The sequence spans 119 residues: Type II secretion system protein I (119 aa).

Residues 1–5 constitute a propeptide, leader sequence; the sequence is MNARG. At Met6 the chain carries N-methylmethionine. Residues 6-26 form a helical membrane-spanning segment; that stretch reads MTLLEVMVALAVFAIAGLAVM.

Belongs to the GSP I family. Type II secretion is composed of four main components: the outer membrane complex, the inner membrane complex, the cytoplasmic secretion ATPase and the periplasm-spanning pseudopilus. Interacts with core component ExeG. Cleaved by prepilin peptidase. In terms of processing, methylated by prepilin peptidase at the amino group of the N-terminal methionine once the leader sequence is cleaved by prepilin peptidase.

Its subcellular location is the cell inner membrane. Functionally, component of the type II secretion system required for the energy-dependent secretion of extracellular factors such as proteases and toxins from the periplasm. Part of the pseudopilus tip complex that is critical for the recognition and binding of secretion substrates. The sequence is that of Type II secretion system protein I (exeI) from Aeromonas hydrophila.